A 463-amino-acid polypeptide reads, in one-letter code: Ribosomal protein uS12 methylthiotransferase RimO (463 aa).

The interval 1–26 is disordered; that stretch reads MPAMSQNPPLLRPDLAPAPIFDTSRR. The segment covering 8–19 has biased composition (low complexity); the sequence is PPLLRPDLAPAP. The MTTase N-terminal domain maps to 30–140; the sequence is PTIGMVSLGC…VLDAVHHAVP (111 aa). 6 residues coordinate [4Fe-4S] cluster: cysteine 39, cysteine 75, cysteine 104, cysteine 171, cysteine 175, and cysteine 178. In terms of domain architecture, Radical SAM core spans 157–395; sequence LTPRHYSYLK…MQKAQAISEA (239 aa). Residues 398–463 form the TRAM domain; sequence AAKVGHRIEV…AGEYDLWGRL (66 aa).

The protein belongs to the methylthiotransferase family. RimO subfamily. Requires [4Fe-4S] cluster as cofactor.

Its subcellular location is the cytoplasm. The catalysed reaction is L-aspartate(89)-[ribosomal protein uS12]-hydrogen + (sulfur carrier)-SH + AH2 + 2 S-adenosyl-L-methionine = 3-methylsulfanyl-L-aspartate(89)-[ribosomal protein uS12]-hydrogen + (sulfur carrier)-H + 5'-deoxyadenosine + L-methionine + A + S-adenosyl-L-homocysteine + 2 H(+). Catalyzes the methylthiolation of an aspartic acid residue of ribosomal protein uS12. The protein is Ribosomal protein uS12 methylthiotransferase RimO of Paracoccus denitrificans (strain Pd 1222).